We begin with the raw amino-acid sequence, 117 residues long: Large ribosomal subunit protein uL18 (117 aa).

This sequence belongs to the universal ribosomal protein uL18 family. As to quaternary structure, part of the 50S ribosomal subunit; part of the 5S rRNA/L5/L18/L25 subcomplex. Contacts the 5S and 23S rRNAs.

This is one of the proteins that bind and probably mediate the attachment of the 5S RNA into the large ribosomal subunit, where it forms part of the central protuberance. In Aeromonas salmonicida (strain A449), this protein is Large ribosomal subunit protein uL18.